The sequence spans 378 residues: Phosphatidyl-myo-inositol mannosyltransferase (378 aa).

GDP-alpha-D-mannose contacts are provided by tyrosine 9 and glycine 16. A 1,2-diacyl-sn-glycero-3-phospho-(1D-myo-inositol) contacts are provided by residues glutamine 18, 62 to 63, and arginine 68; that span reads YN. GDP-alpha-D-mannose-binding positions include arginine 196, 201–202, 251–253, lysine 256, 274–278, and glutamate 282; these read RK, VDD, and ESFGI.

This sequence belongs to the glycosyltransferase group 1 family. As to quaternary structure, monomer. Requires Mg(2+) as cofactor.

The protein localises to the cell membrane. The catalysed reaction is a 1,2-diacyl-sn-glycero-3-phospho-(1D-myo-inositol) + GDP-alpha-D-mannose = a 1,2-diacyl-sn-glycero-3-phospho-[alpha-D-mannopyranosyl-(1&lt;-&gt;6)-D-myo-inositol] + GDP + H(+). Its pathway is phospholipid metabolism; phosphatidylinositol metabolism. In terms of biological role, involved in the biosynthesis of phosphatidyl-myo-inositol mannosides (PIM) which are early precursors in the biosynthesis of lipomannans (LM) and lipoarabinomannans (LAM). Catalyzes the addition of a mannosyl residue from GDP-D-mannose (GDP-Man) to the position 2 of the carrier lipid phosphatidyl-myo-inositol (PI) to generate a phosphatidyl-myo-inositol bearing an alpha-1,2-linked mannose residue (PIM1). This is Phosphatidyl-myo-inositol mannosyltransferase from Mycobacterium bovis (strain ATCC BAA-935 / AF2122/97).